The sequence spans 455 residues: Phosphoglucosamine mutase (455 aa).

Residue S102 is the Phosphoserine intermediate of the active site. Mg(2+)-binding residues include S102, D241, D243, and D245. S102 is subject to Phosphoserine.

This sequence belongs to the phosphohexose mutase family. It depends on Mg(2+) as a cofactor. Post-translationally, activated by phosphorylation.

It catalyses the reaction alpha-D-glucosamine 1-phosphate = D-glucosamine 6-phosphate. In terms of biological role, catalyzes the conversion of glucosamine-6-phosphate to glucosamine-1-phosphate. This is Phosphoglucosamine mutase from Legionella pneumophila (strain Corby).